Reading from the N-terminus, the 332-residue chain is Processive diacylglycerol alpha-glucosyltransferase (332 aa).

Belongs to the glycosyltransferase group 1 family. Glycosyltransferase 4 subfamily. The cofactor is Mg(2+).

The protein resides in the cell membrane. It carries out the reaction a 1,2-diacyl-sn-glycerol + UDP-alpha-D-glucose = a 1,2-diacyl-3-O-(alpha-D-glucopyranosyl)-sn-glycerol + UDP + H(+). The enzyme catalyses a 1,2-diacyl-3-O-(alpha-D-glucopyranosyl)-sn-glycerol + UDP-alpha-D-glucose = a 1,2-diacyl-3-O-[alpha-D-glucosyl-(1-&gt; 2)-alpha-D-glucosyl]-sn-glycerol + UDP + H(+). It functions in the pathway glycolipid metabolism; diglucosyl-diacylglycerol biosynthesis. Activated by the negatively charged lipids phosphatidylglycerol (PG), cardiolipin (CL), nonbilayer-prone 1,3-DAG, 1,2-dioleoylphosphatidylglycerol (DOPG) and 1,2-dioleoylphosphatidylserine (DOPS). Inhibited by 1,2-diacyl-3-O-(alpha-D-galactopyranosyl)-sn-glycerol, 1,2-diacyl-3-O-[6-O-acyl(alpha-D-glucopyranosyl)]-sn-glycerol and 1,2-diacyl-3-O-[alpha-D-glucopyranosyl-(1-&gt;2)-O-(6-O-acyl-alpha-D-glucopyranosyl)]-sn-glycerol. Its function is as follows. Processive glucosyltransferase involved in the biosynthesis of both the non-bilayer-prone alpha-monoglucosyldiacylglycerol and the bilayer-forming membrane lipid alpha-diglucosyldiacylglycerol. These are major components for maintaining the anionic lipid surface charge density, for balancing the bilayer to non-bilayer phase equilibria and for keeping a constant lipid bilayer spontaneous curvature (curvature packing stress). Catalyzes the transfer of a glucosyl residue from UDP-Glc to diacylglycerol (DAG) acceptor to form the corresponding alpha-glucosyl-DAG (1,2-diacyl-3-O-(alpha-D-glucopyranosyl)-sn-glycerol), which then acts as acceptor to give alpha-diglucosyl-DAG product (3-O-(alpha-D-glucopyranosyl-alpha-(1-&gt;2)-D-glucopyranosyl)-1,2-diacyl-sn-glycerol). It can only use UDP-Glc as sugar donor. The sequence is that of Processive diacylglycerol alpha-glucosyltransferase (dgs) from Acholeplasma laidlawii.